A 117-amino-acid polypeptide reads, in one-letter code: Large ribosomal subunit protein uL22 (117 aa).

This sequence belongs to the universal ribosomal protein uL22 family. Part of the 50S ribosomal subunit.

Its function is as follows. This protein binds specifically to 23S rRNA; its binding is stimulated by other ribosomal proteins, e.g. L4, L17, and L20. It is important during the early stages of 50S assembly. It makes multiple contacts with different domains of the 23S rRNA in the assembled 50S subunit and ribosome. The globular domain of the protein is located near the polypeptide exit tunnel on the outside of the subunit, while an extended beta-hairpin is found that lines the wall of the exit tunnel in the center of the 70S ribosome. This Lactobacillus delbrueckii subsp. bulgaricus (strain ATCC 11842 / DSM 20081 / BCRC 10696 / JCM 1002 / NBRC 13953 / NCIMB 11778 / NCTC 12712 / WDCM 00102 / Lb 14) protein is Large ribosomal subunit protein uL22.